Here is a 1052-residue protein sequence, read N- to C-terminus: SE-cephalotoxin (1052 aa).

The signal sequence occupies residues 1–21; sequence MMGTSRCVILLFALLLWAANA. Positions 22–29 are excised as a propeptide; sequence APPEIHTT. Asn41 carries an N-linked (GlcNAc...) asparagine glycan. A coiled-coil region spans residues 130-194; sequence TGVNRKLDQI…DMNKRRLMAE (65 aa). Asn353 is a glycosylation site (N-linked (GlcNAc...) asparagine). The 38-residue stretch at 460-497 folds into the EGF-like domain; that stretch reads PGNPCNHGCNGHGECKVVPYTDQFQCFCHGNYEGKMCQ. 3 disulfides stabilise this stretch: Cys464–Cys474, Cys468–Cys485, and Cys487–Cys496. 2 N-linked (GlcNAc...) asparagine glycosylation sites follow: Asn576 and Asn715. The region spanning 709–769 is the Sushi domain; it reads TSCPPLNVTH…QWSATPKCES (61 aa). Cystine bridges form between Cys711-Cys752, Cys739-Cys767, Cys780-Cys814, Cys784-Cys820, Cys795-Cys804, Cys829-Cys847, and Cys841-Cys858. The TSP type-1 domain occupies 768–821; it reads ESSWSRWSKWSACASTCGNATQSRRRRCLGQSESEKCIGPSKQVRKCFVEDCCQ. Asn786 carries N-linked (GlcNAc...) asparagine glycosylation. The region spanning 819-859 is the LDL-receptor class A domain; the sequence is CCQEKYGKFKCDNNKCISLSRVCDGNDDCRNAEDESKSRCK.

As to quaternary structure, monomer. In terms of tissue distribution, expressed by the salivary gland.

Its subcellular location is the secreted. This is SE-cephalotoxin from Acanthosepion esculentum (Golden cuttlefish).